The following is a 234-amino-acid chain: MQNFKVDFLTKNCKQIYQRKKHVILGISPFTSKYNESYIRKIIQWANSNFDDFSILLAGEESKNLLECLGYSSSKANQKVRKEIKRQIRFCEDEIIKCNKTITNRIHRFSDFKNNIYYIDIYKTIVDQFNTDSNFKNSCLKMSLQALQSKGKNVNTSIEITDETLEYAAQYVLAELPFFLNANPIINTQETLMAYHAPWELGTNIINDQFNLKMNEKQGYIILTEKGDNYVKSV.

The active-site Nucleophile is the Ser28. Substrate contacts are provided by residues 171–175 (YVLAE), Tyr195, and 200–201 (EL).

The protein belongs to the CDPS family.

The catalysed reaction is 2 L-leucyl-tRNA(Leu) = cyclo(L-leucyl-L-leucyl) + 2 tRNA(Leu) + 2 H(+). In terms of biological role, it uses activated amino acids in the form of aminoacyl-tRNAs (aa-tRNAs) as substrates to catalyze the ATP-independent formation of cyclodipeptides which are intermediates in diketopiperazine (DKP) biosynthetic pathways. Catalyzes the formation of cyclo(L-Leu-L-Leu) (cLL) from L-leucyl-tRNA(Leu). Can incorporate various nonpolar residues, such as L-phenylalanine, L-leucine and L-methionine, into cyclodipeptides. The sequence is that of Cyclo(L-leucyl-L-leucyl) synthase from Staphylococcus haemolyticus (strain JCSC1435).